The primary structure comprises 492 residues: N-succinylglutamate 5-semialdehyde dehydrogenase (492 aa).

Residue 220–225 coordinates NAD(+); sequence GSASTG. Residues E243 and C277 contribute to the active site.

The protein belongs to the aldehyde dehydrogenase family. AstD subfamily.

It catalyses the reaction N-succinyl-L-glutamate 5-semialdehyde + NAD(+) + H2O = N-succinyl-L-glutamate + NADH + 2 H(+). The protein operates within amino-acid degradation; L-arginine degradation via AST pathway; L-glutamate and succinate from L-arginine: step 4/5. Functionally, catalyzes the NAD-dependent reduction of succinylglutamate semialdehyde into succinylglutamate. This Salmonella schwarzengrund (strain CVM19633) protein is N-succinylglutamate 5-semialdehyde dehydrogenase.